Here is a 428-residue protein sequence, read N- to C-terminus: Cytokine-dependent hematopoietic cell linker (428 aa).

Residues 1–22 (MNRQGNRKTTKEGSNDLKFQNF) form a disordered region. 2 positions are modified to phosphotyrosine; by LYN: tyrosine 69 and tyrosine 96. Disordered regions lie at residues 135–198 (DKPI…EVQR) and 244–271 (SSSF…PQRC). The segment at 159 to 164 (PLPPPR) is mediates interaction with PLCG1; essential for BCR signaling; involved in restoration of BCR-induced calcium response and ERK2 and JNK2 activation in BLNK-deficient cells expressing LAT. A mediates interaction with LAT, GRB2, and FGR; involved in translocation to the glycolipid-enriched microdomain and restoration of BCR-induced calcium response in BLNK-deficient DT40 cells expressing LAT region spans residues 178 to 180 (PEP). A compositionally biased stretch (low complexity) spans 244 to 253 (SSSFTTSNHS). Residues 309–419 (WYIGEYSRQA…RKQCHLTQPL (111 aa)) form the SH2 domain.

As to quaternary structure, when phosphorylated, interacts with PLCG1, PLCG2, GRB2, VAV and LAT. Interacts with LBR and AGO2. Interacts with FGR. Part of a complex consisting of CLNK, SKAP1 and FYB1. Interacts (via SH2 domain) with FYB1; this interaction allows SKAP1 and FYB1 to promote tyrosine phosphorylation of CLNK by LYN. Interacts (via SH2 domain) with MAP4K1. Post-translationally, tyrosine-phosphorylated upon BCR cross-linking. Tyrosine phosphorylation at both Tyr-69 and Tyr-96 are required for BCR-induced calcium response and are essential to restore PLCG2-mediated signaling in BLNK-deficient DT40 cells, but this phosphorylation is dispensable in cells expressing LAT. Interacts with the SH2 domain of PLCG1 via phosphorylated Tyr-96. Tyrosine phosphorylation is increased when complexed with SKAP1 and FYB1.

Its subcellular location is the cytoplasm. An adapter protein which plays a role in the regulation of immunoreceptor signaling, including PLC-gamma-mediated B-cell antigen receptor (BCR) signaling and FC-epsilon R1-mediated mast cell degranulation. Together with FGR, it acts as a negative regulator of natural killer cell-activating receptors and inhibits interferon-gamma production. Acts as a positive regulator of both T-cell receptor and natural killer T (NKT) cell receptor signaling in CD4-positive NKT cells. Together with MAP4K1, it enhances CD3-triggered activation of T-cells and subsequent IL2 production. May be involved in tumor necrosis factor induced cell death by promoting reactive oxidative species generation, and MLKL oligomerization, ultimately leading to necrosis. Involved in phosphorylation of LAT. May be involved in high affinity immunoglobulin epsilon receptor signaling in mast cells. The protein is Cytokine-dependent hematopoietic cell linker (CLNK) of Homo sapiens (Human).